The sequence spans 511 residues: Histidine ammonia-lyase (511 aa).

Positions 142–144 (ASG) form a cross-link, 5-imidazolinone (Ala-Gly). 2,3-didehydroalanine (Ser) is present on Ser-143.

It belongs to the PAL/histidase family. Contains an active site 4-methylidene-imidazol-5-one (MIO), which is formed autocatalytically by cyclization and dehydration of residues Ala-Ser-Gly.

It is found in the cytoplasm. It catalyses the reaction L-histidine = trans-urocanate + NH4(+). It participates in amino-acid degradation; L-histidine degradation into L-glutamate; N-formimidoyl-L-glutamate from L-histidine: step 1/3. This Chelativorans sp. (strain BNC1) protein is Histidine ammonia-lyase.